A 345-amino-acid polypeptide reads, in one-letter code: Fructose-bisphosphate aldolase, plasmid (345 aa).

Position 50 (S50) interacts with D-glyceraldehyde 3-phosphate. D83 serves as the catalytic Proton donor. Positions 84, 105, 142, and 198 each coordinate Zn(2+). Residue G199 coordinates dihydroxyacetone phosphate. H232 contributes to the Zn(2+) binding site. Dihydroxyacetone phosphate-binding positions include 233 to 235 (GSS) and 275 to 278 (NIDT).

It belongs to the class II fructose-bisphosphate aldolase family. In terms of assembly, homodimer. Zn(2+) serves as cofactor.

It catalyses the reaction beta-D-fructose 1,6-bisphosphate = D-glyceraldehyde 3-phosphate + dihydroxyacetone phosphate. It participates in carbohydrate biosynthesis; Calvin cycle. It functions in the pathway carbohydrate degradation; glycolysis; D-glyceraldehyde 3-phosphate and glycerone phosphate from D-glucose: step 4/4. In terms of biological role, catalyzes the aldol condensation of dihydroxyacetone phosphate (DHAP or glycerone-phosphate) with glyceraldehyde 3-phosphate (G3P) to form fructose 1,6-bisphosphate (FBP) in gluconeogenesis and the reverse reaction in glycolysis. This Cupriavidus necator (strain ATCC 17699 / DSM 428 / KCTC 22496 / NCIMB 10442 / H16 / Stanier 337) (Ralstonia eutropha) protein is Fructose-bisphosphate aldolase, plasmid (cbbAP).